Reading from the N-terminus, the 194-residue chain is Peptidyl-tRNA hydrolase (194 aa).

TRNA is bound at residue tyrosine 16. The Proton acceptor role is filled by histidine 21. TRNA-binding residues include phenylalanine 67, asparagine 69, and asparagine 115.

The protein belongs to the PTH family. In terms of assembly, monomer.

It localises to the cytoplasm. It catalyses the reaction an N-acyl-L-alpha-aminoacyl-tRNA + H2O = an N-acyl-L-amino acid + a tRNA + H(+). In terms of biological role, hydrolyzes ribosome-free peptidyl-tRNAs (with 1 or more amino acids incorporated), which drop off the ribosome during protein synthesis, or as a result of ribosome stalling. Its function is as follows. Catalyzes the release of premature peptidyl moieties from peptidyl-tRNA molecules trapped in stalled 50S ribosomal subunits, and thus maintains levels of free tRNAs and 50S ribosomes. This is Peptidyl-tRNA hydrolase from Salmonella heidelberg (strain SL476).